Consider the following 904-residue polypeptide: UPF0182 protein CKL_0015 (904 aa).

A run of 7 helical transmembrane segments spans residues 9–29, 47–67, 96–116, 157–177, 208–228, 253–273, and 279–299; these read SLIVILFVCILFLNKIVDFII, LIAICKLMIPLFIIIYISIVL, IFIIVNLIVSFLFSYAFAATY, ILSLIIFLGLITLVTYFTLSV, LAVLAALVMICVSIGYILKCI, YKIIAAASIISAVIIFISILV, and IIVSITVIVALILIKSLSYTV.

It belongs to the UPF0182 family.

The protein resides in the cell membrane. In Clostridium kluyveri (strain ATCC 8527 / DSM 555 / NBRC 12016 / NCIMB 10680 / K1), this protein is UPF0182 protein CKL_0015.